Reading from the N-terminus, the 699-residue chain is Endoplasmic reticulum mannosyl-oligosaccharide 1,2-alpha-mannosidase (699 aa).

The Cytoplasmic segment spans residues Met1–Asn84. The helical; Signal-anchor for type II membrane protein transmembrane segment at Met85–Ala105 threads the bilayer. At Asp106–Ala699 the chain is on the lumenal side. Residues Ile125–Pro243 are disordered. Residues Asp176 to Pro201 show a composition bias toward basic and acidic residues. Glu330 serves as the catalytic Proton donor. Asp463 is an active-site residue. A disulfide bridge links Cys527 with Cys556. Glu570 (proton donor) is an active-site residue. Glu599 is a catalytic residue. Thr688 provides a ligand contact to Ca(2+).

It belongs to the glycosyl hydrolase 47 family. The cofactor is Ca(2+). Widely expressed.

It localises to the endoplasmic reticulum membrane. The enzyme catalyses N(4)-(alpha-D-Man-(1-&gt;2)-alpha-D-Man-(1-&gt;2)-alpha-D-Man-(1-&gt;3)-[alpha-D-Man-(1-&gt;2)-alpha-D-Man-(1-&gt;3)-[alpha-D-Man-(1-&gt;2)-alpha-D-Man-(1-&gt;6)]-alpha-D-Man-(1-&gt;6)]-beta-D-Man-(1-&gt;4)-beta-D-GlcNAc-(1-&gt;4)-beta-D-GlcNAc)-L-asparaginyl-[protein] (N-glucan mannose isomer 9A1,2,3B1,2,3) + 4 H2O = N(4)-(alpha-D-Man-(1-&gt;3)-[alpha-D-Man-(1-&gt;3)-[alpha-D-Man-(1-&gt;6)]-alpha-D-Man-(1-&gt;6)]-beta-D-Man-(1-&gt;4)-beta-D-GlcNAc-(1-&gt;4)-beta-D-GlcNAc)-L-asparaginyl-[protein] (N-glucan mannose isomer 5A1,2) + 4 beta-D-mannose. It catalyses the reaction N(4)-(alpha-D-Man-(1-&gt;2)-alpha-D-Man-(1-&gt;2)-alpha-D-Man-(1-&gt;3)-[alpha-D-Man-(1-&gt;3)-[alpha-D-Man-(1-&gt;2)-alpha-D-Man-(1-&gt;6)]-alpha-D-Man-(1-&gt;6)]-beta-D-Man-(1-&gt;4)-beta-D-GlcNAc-(1-&gt;4)-beta-D-GlcNAc)-L-asparaginyl-[protein] (N-glucan mannose isomer 8A1,2,3B1,3) + 3 H2O = N(4)-(alpha-D-Man-(1-&gt;3)-[alpha-D-Man-(1-&gt;3)-[alpha-D-Man-(1-&gt;6)]-alpha-D-Man-(1-&gt;6)]-beta-D-Man-(1-&gt;4)-beta-D-GlcNAc-(1-&gt;4)-beta-D-GlcNAc)-L-asparaginyl-[protein] (N-glucan mannose isomer 5A1,2) + 3 beta-D-mannose. It functions in the pathway protein modification; protein glycosylation. With respect to regulation, inhibited by both 1-deoxymannojirimycin (dMNJ) and kifunensine. In terms of biological role, involved in glycoprotein quality control targeting of misfolded glycoproteins for degradation. It primarily trims a single alpha-1,2-linked mannose residue from Man(9)GlcNAc(2) to produce Man(8)GlcNAc(2), but at high enzyme concentrations, as found in the ER quality control compartment (ERQC), it further trims the carbohydrates to Man(5-6)GlcNAc(2). This chain is Endoplasmic reticulum mannosyl-oligosaccharide 1,2-alpha-mannosidase (MAN1B1), found in Homo sapiens (Human).